We begin with the raw amino-acid sequence, 162 residues long: Large ribosomal subunit protein uL15 (162 aa).

Residues 1 to 41 (MKLSDIADNAGSRKKRMRVGRGIGSGKGKTAGRGGKGQTAR) form a disordered region. Residues 21–37 (RGIGSGKGKTAGRGGKG) show a composition bias toward gly residues.

The protein belongs to the universal ribosomal protein uL15 family. In terms of assembly, part of the 50S ribosomal subunit.

In terms of biological role, binds to the 23S rRNA. This is Large ribosomal subunit protein uL15 from Rhodopseudomonas palustris (strain BisB18).